We begin with the raw amino-acid sequence, 100 residues long: uncharacterized protein (100 aa).

The disordered stretch occupies residues 1-86 (MRGTRRGPSG…RHRPPEVTEP (86 aa)). A compositionally biased stretch (pro residues) spans 35 to 48 (DTPPPRAPPPPPPL).

This is an uncharacterized protein from Human herpesvirus 6A (strain Uganda-1102) (HHV-6 variant A).